A 100-amino-acid polypeptide reads, in one-letter code: Small ribosomal subunit protein uS14c (100 aa).

Belongs to the universal ribosomal protein uS14 family. Part of the 30S ribosomal subunit.

The protein localises to the plastid. The protein resides in the chloroplast. Its function is as follows. Binds 16S rRNA, required for the assembly of 30S particles. The protein is Small ribosomal subunit protein uS14c of Pisum sativum (Garden pea).